Consider the following 367-residue polypeptide: Otolith matrix protein 1 (367 aa).

A signal peptide spans 1–23 (MDRLDRRLAATLLLFSFISFSTQ). A Transferrin-like domain is found at 27-363 (ISWCVVSEAE…YTTVLQAFEC (337 aa)).

It belongs to the transferrin family. Interacts with OTOL1. As to expression, expressed in the sacculus during the day.

The protein resides in the secreted. Required for normal otolith growth and deposition of otolin-1 in the otolith. The sequence is that of Otolith matrix protein 1 (otomp) from Oncorhynchus mykiss (Rainbow trout).